Reading from the N-terminus, the 494-residue chain is Aspartyl/glutamyl-tRNA(Asn/Gln) amidotransferase subunit B (494 aa).

Belongs to the GatB/GatE family. GatB subfamily. In terms of assembly, heterotrimer of A, B and C subunits.

The enzyme catalyses L-glutamyl-tRNA(Gln) + L-glutamine + ATP + H2O = L-glutaminyl-tRNA(Gln) + L-glutamate + ADP + phosphate + H(+). It catalyses the reaction L-aspartyl-tRNA(Asn) + L-glutamine + ATP + H2O = L-asparaginyl-tRNA(Asn) + L-glutamate + ADP + phosphate + 2 H(+). Allows the formation of correctly charged Asn-tRNA(Asn) or Gln-tRNA(Gln) through the transamidation of misacylated Asp-tRNA(Asn) or Glu-tRNA(Gln) in organisms which lack either or both of asparaginyl-tRNA or glutaminyl-tRNA synthetases. The reaction takes place in the presence of glutamine and ATP through an activated phospho-Asp-tRNA(Asn) or phospho-Glu-tRNA(Gln). The polypeptide is Aspartyl/glutamyl-tRNA(Asn/Gln) amidotransferase subunit B (Nitrobacter hamburgensis (strain DSM 10229 / NCIMB 13809 / X14)).